The following is a 124-amino-acid chain: Large ribosomal subunit protein bL12 (124 aa).

Belongs to the bacterial ribosomal protein bL12 family. In terms of assembly, homodimer. Part of the ribosomal stalk of the 50S ribosomal subunit. Forms a multimeric L10(L12)X complex, where L10 forms an elongated spine to which 2 to 4 L12 dimers bind in a sequential fashion. Binds GTP-bound translation factors.

Forms part of the ribosomal stalk which helps the ribosome interact with GTP-bound translation factors. Is thus essential for accurate translation. This chain is Large ribosomal subunit protein bL12, found in Allorhizobium ampelinum (strain ATCC BAA-846 / DSM 112012 / S4) (Agrobacterium vitis (strain S4)).